A 1509-amino-acid chain; its full sequence is Dynein axonemal assembly factor 1 homolog (1509 aa).

LRR repeat units lie at residues 34-56 (RLND…EEYT), 57-78 (ELKC…EKLS), 79-100 (KLKC…EPCR), 101-122 (ELDT…GTNI), 125-146 (VLNT…SDLV), and 150-171 (TLSV…KIFE). Residues 185 to 223 (PVVSRLPQYRKTLILACKELTYLDSRPVFPRDRACAEAW) form the LRRCT domain. Disordered regions lie at residues 252 to 280 (CTIR…DDTC), 306 to 327 (HPTS…ATSS), 962 to 1008 (SGDL…DSKN), and 1103 to 1122 (TLQT…KLRN). Positions 309–318 (SESGASTSSS) are enriched in low complexity. Positions 978 to 990 (SESEDYDTADDEY) are enriched in acidic residues. Positions 1103-1112 (TLQTSFSTVG) are enriched in polar residues.

Belongs to the DNAAF1 family.

Its subcellular location is the cell projection. It localises to the cilium. Functionally, cilium-specific protein required for cilia structures. The sequence is that of Dynein axonemal assembly factor 1 homolog (dtr) from Drosophila yakuba (Fruit fly).